Here is a 94-residue protein sequence, read N- to C-terminus: Large ribosomal subunit protein bL25 (94 aa).

This sequence belongs to the bacterial ribosomal protein bL25 family. As to quaternary structure, part of the 50S ribosomal subunit; part of the 5S rRNA/L5/L18/L25 subcomplex. Contacts the 5S rRNA. Binds to the 5S rRNA independently of L5 and L18.

In terms of biological role, this is one of the proteins that binds to the 5S RNA in the ribosome where it forms part of the central protuberance. The protein is Large ribosomal subunit protein bL25 of Erwinia tasmaniensis (strain DSM 17950 / CFBP 7177 / CIP 109463 / NCPPB 4357 / Et1/99).